A 178-amino-acid chain; its full sequence is ATP synthase subunit b, chloroplastic (178 aa).

A helical transmembrane segment spans residues 23–43; it reads IFETNIINLAAVVAIVISFVG.

The protein belongs to the ATPase B chain family. In terms of assembly, F-type ATPases have 2 components, F(1) - the catalytic core - and F(0) - the membrane proton channel. F(1) has five subunits: alpha(3), beta(3), gamma(1), delta(1), epsilon(1). F(0) has four main subunits: a(1), b(1), b'(1) and c(10-14). The alpha and beta chains form an alternating ring which encloses part of the gamma chain. F(1) is attached to F(0) by a central stalk formed by the gamma and epsilon chains, while a peripheral stalk is formed by the delta, b and b' chains.

It localises to the plastid. It is found in the chloroplast thylakoid membrane. Functionally, f(1)F(0) ATP synthase produces ATP from ADP in the presence of a proton or sodium gradient. F-type ATPases consist of two structural domains, F(1) containing the extramembraneous catalytic core and F(0) containing the membrane proton channel, linked together by a central stalk and a peripheral stalk. During catalysis, ATP synthesis in the catalytic domain of F(1) is coupled via a rotary mechanism of the central stalk subunits to proton translocation. Component of the F(0) channel, it forms part of the peripheral stalk, linking F(1) to F(0). This Tetradesmus obliquus (Green alga) protein is ATP synthase subunit b, chloroplastic.